A 340-amino-acid polypeptide reads, in one-letter code: Pre-mRNA-splicing factor cwf17 (340 aa).

WD repeat units lie at residues 48–87 (GHTAEVLVARFDPSGSYFASGGMDRQILLWNVFGDVKNYG), 91–130 (GCKGAITDLQWSRDSRVVYCSSSDTHLMSWDAVSGQKIRK), 133–173 (GHAG…CIKT), 175–214 (EEKYPLTAVAIAQQGTQVFIGGIDGAIKIWDLRNNHCSHV), 217–256 (GHKDIITSLAISKDGSSLLSNSMDNTVRIFDVKPFASAQR), 267–306 (GQEHNLLGVAWSRNSRFVGAGSSDKNVYVWSATGDLRYVL), and 308–339 (GHEGSVNHVDFHPHQDIILSCSSDRTIFLGEL).

In terms of assembly, belongs to the 40S cdc5-associated complex (or cwf complex), a spliceosome sub-complex reminiscent of a late-stage spliceosome composed of the U2, U5 and U6 snRNAs and at least brr2, cdc5, cwf2/prp3, cwf3/syf1, cwf4/syf3, cwf5/ecm2, spp42/cwf6, cwf7/spf27, cwf8, cwf9, cwf10, cwf11, cwf12, prp45/cwf13, cwf14, cwf15, cwf16, cwf17, cwf18, cwf19, cwf20, cwf21, cwf22, cwf23, cwf24, cwf25, cwf26, cyp7/cwf27, cwf28, cwf29/ist3, lea1, msl1, prp5/cwf1, prp10, prp12/sap130, prp17, prp22, sap61, sap62, sap114, sap145, slu7, smb1, smd1, smd3, smf1, smg1 and syf2.

Its subcellular location is the nucleus. Involved in mRNA splicing where it associates with cdc5 and the other cwf proteins as part of the spliceosome. This chain is Pre-mRNA-splicing factor cwf17 (cwf17), found in Schizosaccharomyces pombe (strain 972 / ATCC 24843) (Fission yeast).